A 79-amino-acid chain; its full sequence is Hemoglobin subunit zeta (79 aa).

The residue at position 1 (serine 1) is an N-acetylserine. Residues 1 to 79 (SLTKTXXTII…FKLLSHXFLV (79 aa)) enclose the Globin domain. Phosphoserine is present on residues serine 38 and serine 53. A heme b-binding site is contributed by histidine 59.

It belongs to the globin family. In terms of assembly, heterotetramer of two zeta chains and two epsilon chains.

Functionally, the zeta chain is an alpha-type chain of mammalian embryonic hemoglobin. The sequence is that of Hemoglobin subunit zeta from Notamacropus eugenii (Tammar wallaby).